The chain runs to 329 residues: Transcription factor RF2b (329 aa).

Disordered regions lie at residues 1–24 and 62–97; these read MQEPKHTDPAAMRGAHHRRARSEV and SSGPAAAGGSDRDRAAETSSPPRPKHRHSSSVDGSG. The 64-residue stretch at 132–195 folds into the bZIP domain; it reads DPKRAKRILA…TGLSAENAEL (64 aa). Positions 134–155 are basic motif; that stretch reads KRAKRILANRQSAARSKERKAR. The interval 160 to 174 is leucine-zipper; that stretch reads LERKVQTLQTEATTL. The interval 260–303 is disordered; that stretch reads RQNGGTQLPPQFQPPRPNVPNHMLSHPNGLQDIMQQDPLGRLQG.

It belongs to the bZIP family. Binds DNA as a homodimer or as a heterodimer with RF2a. The heterodimer binds stronger to DNA than the homodimer. As to expression, expressed at high levels in roots, low level in leaf sheath, but not in leaf blade. Predominantly expressed in vascular tissues.

The protein resides in the nucleus. Its function is as follows. Transcription factor probably involved in vascular development and shoot tissue organization. Binds to the DNA sequence 5'-CCGAGTGTGCCCCTGG-3' present in the promoter region Box II of the phloem-specific rice tungro bacilliform virus (RTBV) promoter. May regulate tissue-specific expression of the RTBV promoter and virus replication. The sequence is that of Transcription factor RF2b (RF2b) from Oryza sativa subsp. japonica (Rice).